We begin with the raw amino-acid sequence, 692 residues long: Elongation factor G (692 aa).

The tr-type G domain maps to 8–283 (KNTRNIGIMA…AVLDYLPSPV (276 aa)). GTP-binding positions include 17–24 (AHIDAGKT), 81–85 (DTPGH), and 135–138 (NKMD).

This sequence belongs to the TRAFAC class translation factor GTPase superfamily. Classic translation factor GTPase family. EF-G/EF-2 subfamily.

The protein resides in the cytoplasm. In terms of biological role, catalyzes the GTP-dependent ribosomal translocation step during translation elongation. During this step, the ribosome changes from the pre-translocational (PRE) to the post-translocational (POST) state as the newly formed A-site-bound peptidyl-tRNA and P-site-bound deacylated tRNA move to the P and E sites, respectively. Catalyzes the coordinated movement of the two tRNA molecules, the mRNA and conformational changes in the ribosome. The chain is Elongation factor G from Exiguobacterium sibiricum (strain DSM 17290 / CCUG 55495 / CIP 109462 / JCM 13490 / 255-15).